The primary structure comprises 186 residues: Protein TRL14 (186 aa).

N-linked (GlcNAc...) asparagine; by host glycosylation is found at Asn-24, Asn-64, and Asn-72. The chain crosses the membrane as a helical span at residues 143–163 (HAVWAGVVVSVALIALYMGSH).

The protein belongs to the RL11 family.

It is found in the virion membrane. The chain is Protein TRL14 from Human cytomegalovirus (strain AD169) (HHV-5).